Here is a 187-residue protein sequence, read N- to C-terminus: UPF0301 protein YqgE (187 aa).

Belongs to the UPF0301 (AlgH) family.

This chain is UPF0301 protein YqgE, found in Escherichia coli O139:H28 (strain E24377A / ETEC).